Consider the following 163-residue polypeptide: Norbelladine synthase (163 aa).

A tyramine-binding site is contributed by 68–71; the sequence is YHKE. Lys-83 functions as the Proton donor in the catalytic mechanism.

Belongs to the BetVI family. Mostly expressed in bulbs, and, to a lower extent, in roots, stems, leaves and flowers.

It carries out the reaction 3,4-dihydroxybenzaldehyde + tyramine + AH2 = norbelladine + A + H2O. Its pathway is alkaloid biosynthesis. Its function is as follows. Catalyzes the condensation of tyramine and 3,4-dihydroxybenzaldehyde (3,4-DHBA) to form norbelladine, the common precursor to all Amaryllidaceae alkaloids such as galanthamine, lycorine and haemanthamine, and including haemanthamine- and crinamine-type alkaloids, promising anticancer agents. In Narcissus pseudonarcissus (Daffodil), this protein is Norbelladine synthase.